Reading from the N-terminus, the 1457-residue chain is Bridge-like lipid transfer protein family member 3B (1457 aa).

The Chorein N-terminal domain maps to glycine 3–cysteine 94. 2 disordered regions span residues serine 267–glutamine 295 and aspartate 409–serine 449. The segment covering proline 278–glutamine 295 has biased composition (polar residues). Residues serine 414, serine 418, serine 774, and serine 934 each carry the phosphoserine modification. 3 disordered regions span residues serine 975–glycine 1038, alanine 1056–serine 1099, and serine 1145–asparagine 1183. Positions serine 980–glycine 995 are enriched in polar residues. Position 1008 is a phosphoserine (serine 1008). The span at serine 1145–threonine 1180 shows a compositional bias: polar residues. A coiled-coil region spans residues alanine 1410–methionine 1455.

In terms of assembly, homodimer (via N-terminus). Associates with the Golgi-associated retrograde protein (GARP) complex. Interacts with GARP complex component VPS52. Interacts (via C-terminal coiled-coil domain) with STX6.

It is found in the cytoplasm. The protein localises to the cytosol. It localises to the early endosome. Functionally, tube-forming lipid transport protein which mediates the transfer of lipids between membranes at organelle contact sites. Required for retrograde traffic of vesicle clusters in the early endocytic pathway to the Golgi complex. The protein is Bridge-like lipid transfer protein family member 3B (Bltp3b) of Mus musculus (Mouse).